The chain runs to 467 residues: Pup--protein ligase (467 aa).

E12 provides a ligand contact to Mg(2+). Residue R56 participates in ATP binding. Y58 contacts Mg(2+). D60 functions as the Proton acceptor in the catalytic mechanism. E66 is a binding site for Mg(2+). ATP is bound by residues T69 and W431.

It belongs to the Pup ligase/Pup deamidase family. Pup-conjugating enzyme subfamily.

The catalysed reaction is ATP + [prokaryotic ubiquitin-like protein]-L-glutamate + [protein]-L-lysine = ADP + phosphate + N(6)-([prokaryotic ubiquitin-like protein]-gamma-L-glutamyl)-[protein]-L-lysine.. Its pathway is protein degradation; proteasomal Pup-dependent pathway. It functions in the pathway protein modification; protein pupylation. Catalyzes the covalent attachment of the prokaryotic ubiquitin-like protein modifier Pup to the proteasomal substrate proteins, thereby targeting them for proteasomal degradation. This tagging system is termed pupylation. The ligation reaction involves the side-chain carboxylate of the C-terminal glutamate of Pup and the side-chain amino group of a substrate lysine. The protein is Pup--protein ligase of Corynebacterium jeikeium (strain K411).